The sequence spans 363 residues: Spermidine/putrescine import ATP-binding protein PotA (363 aa).

The ABC transporter domain occupies 9 to 239; the sequence is IDVRNAVKRY…PANRFVADFI (231 aa). Residue 41 to 48 participates in ATP binding; it reads GPSGCGKT.

This sequence belongs to the ABC transporter superfamily. Spermidine/putrescine importer (TC 3.A.1.11.1) family. In terms of assembly, the complex is composed of two ATP-binding proteins (PotA), two transmembrane proteins (PotB and PotC) and a solute-binding protein (PotD).

The protein localises to the cell inner membrane. The catalysed reaction is ATP + H2O + polyamine-[polyamine-binding protein]Side 1 = ADP + phosphate + polyamineSide 2 + [polyamine-binding protein]Side 1.. In terms of biological role, part of the ABC transporter complex PotABCD involved in spermidine/putrescine import. Responsible for energy coupling to the transport system. This is Spermidine/putrescine import ATP-binding protein PotA from Roseobacter denitrificans (strain ATCC 33942 / OCh 114) (Erythrobacter sp. (strain OCh 114)).